Reading from the N-terminus, the 140-residue chain is Small ribosomal subunit protein uS19 (140 aa).

It belongs to the universal ribosomal protein uS19 family.

Protein S19 forms a complex with S13 that binds strongly to the 16S ribosomal RNA. The polypeptide is Small ribosomal subunit protein uS19 (Natronomonas pharaonis (strain ATCC 35678 / DSM 2160 / CIP 103997 / JCM 8858 / NBRC 14720 / NCIMB 2260 / Gabara) (Halobacterium pharaonis)).